Here is a 227-residue protein sequence, read N- to C-terminus: Probable septum site-determining protein MinC (227 aa).

This sequence belongs to the MinC family. In terms of assembly, interacts with MinD and FtsZ.

Functionally, cell division inhibitor that blocks the formation of polar Z ring septums. Rapidly oscillates between the poles of the cell to destabilize FtsZ filaments that have formed before they mature into polar Z rings. Prevents FtsZ polymerization. This chain is Probable septum site-determining protein MinC, found in Geobacillus kaustophilus (strain HTA426).